The sequence spans 316 residues: Methionyl-tRNA formyltransferase (316 aa).

109-112 (SALP) provides a ligand contact to (6S)-5,6,7,8-tetrahydrofolate.

The protein belongs to the Fmt family.

The catalysed reaction is L-methionyl-tRNA(fMet) + (6R)-10-formyltetrahydrofolate = N-formyl-L-methionyl-tRNA(fMet) + (6S)-5,6,7,8-tetrahydrofolate + H(+). Its function is as follows. Attaches a formyl group to the free amino group of methionyl-tRNA(fMet). The formyl group appears to play a dual role in the initiator identity of N-formylmethionyl-tRNA by promoting its recognition by IF2 and preventing the misappropriation of this tRNA by the elongation apparatus. In Nocardioides sp. (strain ATCC BAA-499 / JS614), this protein is Methionyl-tRNA formyltransferase.